A 301-amino-acid polypeptide reads, in one-letter code: Probable alpha-L-glutamate ligase 2 (301 aa).

Residues L104–E287 form the ATP-grasp domain. ATP contacts are provided by residues K141, E178–Y179, D187, and R211–N213. Mg(2+) is bound by residues D248, E260, and N262. Mn(2+)-binding residues include D248, E260, and N262.

Belongs to the RimK family. Requires Mg(2+) as cofactor. It depends on Mn(2+) as a cofactor.

The sequence is that of Probable alpha-L-glutamate ligase 2 from Shewanella amazonensis (strain ATCC BAA-1098 / SB2B).